Reading from the N-terminus, the 335-residue chain is 3-hydroxyproline 2-epimerase (335 aa).

Residue cysteine 91 is the Proton acceptor of the active site. Substrate-binding positions include glycine 92–histidine 93, aspartate 251, and glycine 256–serine 257.

The protein belongs to the proline racemase family.

It catalyses the reaction trans-3-hydroxy-L-proline = cis-3-hydroxy-D-proline. The enzyme catalyses trans-4-hydroxy-L-proline = cis-4-hydroxy-D-proline. Catalyzes the epimerization of trans-3-hydroxy-L-proline (t3LHyp) to cis-3-hydroxy-D-proline (c3DHyp) in vitro. Can also catalyze the epimerization of trans-4-hydroxy-L-proline (t3LHyp) to cis-4-hydroxy-D-proline (c4DHyp), albeit with 3.6-fold lower efficiency. Displays no proline racemase activity. This is 3-hydroxyproline 2-epimerase from Burkholderia multivorans (strain ATCC 17616 / 249).